Reading from the N-terminus, the 973-residue chain is Vacuolar protein sorting-associated protein 18 homolog (973 aa).

At Ala2 the chain carries N-acetylalanine. Residues Ser3, Ser11, and Ser13 each carry the phosphoserine modification. An N6-acetyllysine modification is found at Lys362. Residues 454–481 adopt a coiled-coil conformation; that stretch reads EEIALKFLEARQEEALAEFLQRKLASLK. The stretch at 618 to 772 is one CHCR repeat; sequence GSRLDARQLI…VVQEEEDVQT (155 aa). Ser689 carries the phosphoserine modification. The stretch at 802 to 848 forms a coiled coil; the sequence is KEAICSSLKAYNHHIQELQREMEEATASAQRIRRDLQELRGRYGTVE. The RING-type zinc finger occupies 853-947; the sequence is CATCDFPLLN…ELVAAECVYC (95 aa). Residues 903 to 929 form a disordered region; the sequence is GAAPPPAKGSARAKEAEGGAATAGPSR. A Phosphoserine modification is found at Ser912.

The protein belongs to the VPS18 family. Core component of at least two putative endosomal tethering complexes, the homotypic fusion and vacuole protein sorting (HOPS) complex and the class C core vacuole/endosome tethering (CORVET) complex. Their common core is composed of the class C Vps proteins VPS11, VPS16, VPS18 and VPS33A, which in HOPS further associates with VPS39 and VPS41 and in CORVET with VPS8 and TGFBRAP1. Interacts with RAB5C. Interacts with HOOK1. Interacts with STX7, MON1B. Associates with adaptor protein complex 3 (AP-3) and clathrin:AP-3 complexes. Interacts with SYNPO2. Interacts with PLEKHM1. Ubiquitous. Expression was highest in heart and low in lung.

The protein localises to the late endosome membrane. The protein resides in the lysosome membrane. Its subcellular location is the early endosome. It is found in the cytoplasmic vesicle. It localises to the autophagosome. The protein localises to the clathrin-coated vesicle. Functionally, plays a role in vesicle-mediated protein trafficking to lysosomal compartments including the endocytic membrane transport and autophagic pathways. Believed to act as a core component of the putative HOPS and CORVET endosomal tethering complexes which are proposed to be involved in the Rab5-to-Rab7 endosome conversion probably implicating MON1A/B, and via binding SNAREs and SNARE complexes to mediate tethering and docking events during SNARE-mediated membrane fusion. The HOPS complex is proposed to be recruited to Rab7 on the late endosomal membrane and to regulate late endocytic, phagocytic and autophagic traffic towards lysosomes. The CORVET complex is proposed to function as a Rab5 effector to mediate early endosome fusion probably in specific endosome subpopulations. Required for fusion of endosomes and autophagosomes with lysosomes. Involved in dendrite development of Pukinje cells. The chain is Vacuolar protein sorting-associated protein 18 homolog from Homo sapiens (Human).